A 55-amino-acid polypeptide reads, in one-letter code: Large ribosomal subunit protein bL33 (55 aa).

It belongs to the bacterial ribosomal protein bL33 family.

The chain is Large ribosomal subunit protein bL33 from Rhizobium meliloti (strain 1021) (Ensifer meliloti).